Reading from the N-terminus, the 90-residue chain is DNA-binding protein HU-beta (90 aa).

It belongs to the bacterial histone-like protein family. In terms of assembly, heterodimer of an alpha and a beta chain.

Its function is as follows. Histone-like DNA-binding protein which is capable of wrapping DNA to stabilize it, and thus to prevent its denaturation under extreme environmental conditions. The polypeptide is DNA-binding protein HU-beta (hupB) (Serratia marcescens).